Here is an 861-residue protein sequence, read N- to C-terminus: Leucine--tRNA ligase (861 aa).

Residues 42–52 carry the 'HIGH' region motif; sequence PYPSGRLHMGH. Positions 619-623 match the 'KMSKS' region motif; that stretch reads KMSKS. Lys622 contacts ATP.

Belongs to the class-I aminoacyl-tRNA synthetase family.

Its subcellular location is the cytoplasm. The catalysed reaction is tRNA(Leu) + L-leucine + ATP = L-leucyl-tRNA(Leu) + AMP + diphosphate. The polypeptide is Leucine--tRNA ligase (Haemophilus influenzae (strain ATCC 51907 / DSM 11121 / KW20 / Rd)).